The chain runs to 33 residues: GLLNTFKDWAISIAKGAGKGVLTTLSCKLDKSC.

A disulfide bridge connects residues C27 and C33.

Belongs to the frog skin active peptide (FSAP) family. Brevinin subfamily. As to expression, expressed by the skin glands.

It is found in the secreted. Functionally, has antibacterial activity against Gram-positive bacteria. This is Rugosin-A from Glandirana rugosa (Japanese wrinkled frog).